The primary structure comprises 73 residues: UPF0435 protein Lm4b_01721 (73 aa).

It belongs to the UPF0435 family.

This is UPF0435 protein Lm4b_01721 from Listeria monocytogenes serotype 4b (strain CLIP80459).